Reading from the N-terminus, the 570-residue chain is Sulfite reductase [NADPH] hemoprotein beta-component (570 aa).

The [4Fe-4S] cluster site is built by Cys-434, Cys-440, Cys-479, and Cys-483. Cys-483 is a siroheme binding site.

The protein belongs to the nitrite and sulfite reductase 4Fe-4S domain family. In terms of assembly, alpha(8)-beta(8). The alpha component is a flavoprotein, the beta component is a hemoprotein. Siroheme is required as a cofactor. Requires [4Fe-4S] cluster as cofactor.

It carries out the reaction hydrogen sulfide + 3 NADP(+) + 3 H2O = sulfite + 3 NADPH + 4 H(+). The protein operates within sulfur metabolism; hydrogen sulfide biosynthesis; hydrogen sulfide from sulfite (NADPH route): step 1/1. Functionally, component of the sulfite reductase complex that catalyzes the 6-electron reduction of sulfite to sulfide. This is one of several activities required for the biosynthesis of L-cysteine from sulfate. This Shigella boydii serotype 4 (strain Sb227) protein is Sulfite reductase [NADPH] hemoprotein beta-component.